Here is a 341-residue protein sequence, read N- to C-terminus: Glycerol-3-phosphate dehydrogenase [NAD(P)+] (341 aa).

Residues Ser14, Phe15, Arg35, and Lys108 each contribute to the NADPH site. Sn-glycerol 3-phosphate-binding residues include Lys108 and Gly136. Ala140 serves as a coordination point for NADPH. Residues Lys191, Asp244, Ser254, Arg255, and Asn256 each contribute to the sn-glycerol 3-phosphate site. Lys191 serves as the catalytic Proton acceptor. NADPH is bound at residue Arg255. NADPH is bound by residues Val279 and Glu281.

It belongs to the NAD-dependent glycerol-3-phosphate dehydrogenase family.

The protein localises to the cytoplasm. It catalyses the reaction sn-glycerol 3-phosphate + NAD(+) = dihydroxyacetone phosphate + NADH + H(+). The catalysed reaction is sn-glycerol 3-phosphate + NADP(+) = dihydroxyacetone phosphate + NADPH + H(+). It functions in the pathway membrane lipid metabolism; glycerophospholipid metabolism. Its function is as follows. Catalyzes the reduction of the glycolytic intermediate dihydroxyacetone phosphate (DHAP) to sn-glycerol 3-phosphate (G3P), the key precursor for phospholipid synthesis. The polypeptide is Glycerol-3-phosphate dehydrogenase [NAD(P)+] (Pseudomonas syringae pv. syringae (strain B728a)).